Reading from the N-terminus, the 611-residue chain is Elongation factor 4 (611 aa).

A tr-type G domain is found at 11–193 (KHIRNFSIVA…KIVKDVPAPT (183 aa)). GTP contacts are provided by residues 23 to 28 (DHGKST) and 140 to 143 (NKID).

It belongs to the TRAFAC class translation factor GTPase superfamily. Classic translation factor GTPase family. LepA subfamily.

Its subcellular location is the cell membrane. It carries out the reaction GTP + H2O = GDP + phosphate + H(+). Its function is as follows. Required for accurate and efficient protein synthesis under certain stress conditions. May act as a fidelity factor of the translation reaction, by catalyzing a one-codon backward translocation of tRNAs on improperly translocated ribosomes. Back-translocation proceeds from a post-translocation (POST) complex to a pre-translocation (PRE) complex, thus giving elongation factor G a second chance to translocate the tRNAs correctly. Binds to ribosomes in a GTP-dependent manner. This chain is Elongation factor 4, found in Limosilactobacillus reuteri (strain DSM 20016) (Lactobacillus reuteri).